The primary structure comprises 451 residues: Phosphoglucosamine mutase (451 aa).

The Phosphoserine intermediate role is filled by S102. Residues S102, D242, D244, and D246 each contribute to the Mg(2+) site. S102 is subject to Phosphoserine.

This sequence belongs to the phosphohexose mutase family. Requires Mg(2+) as cofactor. Activated by phosphorylation.

It catalyses the reaction alpha-D-glucosamine 1-phosphate = D-glucosamine 6-phosphate. Functionally, catalyzes the conversion of glucosamine-6-phosphate to glucosamine-1-phosphate. The polypeptide is Phosphoglucosamine mutase (Staphylococcus aureus (strain bovine RF122 / ET3-1)).